Here is a 268-residue protein sequence, read N- to C-terminus: Zwei Ig domain protein zig-8 (268 aa).

The N-terminal stretch at 1-21 (MRRFSNICVILFSFLYATGHG) is a signal peptide. 2 Ig-like C2-type domains span residues 40-128 (PSQT…NTVY) and 140-251 (PSPS…NSAT). Cysteines 57 and 118 form a disulfide. 4 N-linked (GlcNAc...) asparagine glycosylation sites follow: asparagine 82, asparagine 155, asparagine 164, and asparagine 191. Cysteine 165 and cysteine 226 form a disulfide bridge.

In terms of tissue distribution, expressed in PVT neurons and pharyngeal muscles.

It is found in the secreted. Together with zig-5, required postembryonically to maintain the position of ASI and ASH head neuron cell bodies and ventral nerve cord axons of PVQ, PVP and HSN neurons by preventing their displacement that could occur during body growth and movement. May act by reducing L1CAM-like protein sax-7 (long isoform) adhesion. This chain is Zwei Ig domain protein zig-8, found in Caenorhabditis elegans.